The sequence spans 1070 residues: DNA-directed RNA polymerase subunit beta (1070 aa).

This sequence belongs to the RNA polymerase beta chain family. As to quaternary structure, in plastids the minimal PEP RNA polymerase catalytic core is composed of four subunits: alpha, beta, beta', and beta''. When a (nuclear-encoded) sigma factor is associated with the core the holoenzyme is formed, which can initiate transcription.

It localises to the plastid. Its subcellular location is the chloroplast. It catalyses the reaction RNA(n) + a ribonucleoside 5'-triphosphate = RNA(n+1) + diphosphate. Functionally, DNA-dependent RNA polymerase catalyzes the transcription of DNA into RNA using the four ribonucleoside triphosphates as substrates. The sequence is that of DNA-directed RNA polymerase subunit beta from Dioscorea elephantipes (Elephant's foot yam).